The chain runs to 88 residues: Small ribosomal subunit protein bS16 (88 aa).

Belongs to the bacterial ribosomal protein bS16 family.

The polypeptide is Small ribosomal subunit protein bS16 (Leptospira interrogans serogroup Icterohaemorrhagiae serovar Lai (strain 56601)).